The following is a 97-amino-acid chain: Histone H1.C2 (97 aa).

Residues 24-97 (AAVPPKKAAP…KKAVKKAPKK (74 aa)) are disordered. Residues 31-97 (AAPKKAVAKK…KKAVKKAPKK (67 aa)) are compositionally biased toward basic residues.

It localises to the nucleus. The protein localises to the chromosome. This is Histone H1.C2 from Trypanosoma cruzi.